The sequence spans 279 residues: Ribosomal RNA small subunit methyltransferase A (279 aa).

Residues H10, L12, G37, E58, D83, and N108 each coordinate S-adenosyl-L-methionine.

This sequence belongs to the class I-like SAM-binding methyltransferase superfamily. rRNA adenine N(6)-methyltransferase family. RsmA subfamily.

It localises to the cytoplasm. It carries out the reaction adenosine(1518)/adenosine(1519) in 16S rRNA + 4 S-adenosyl-L-methionine = N(6)-dimethyladenosine(1518)/N(6)-dimethyladenosine(1519) in 16S rRNA + 4 S-adenosyl-L-homocysteine + 4 H(+). Specifically dimethylates two adjacent adenosines (A1518 and A1519) in the loop of a conserved hairpin near the 3'-end of 16S rRNA in the 30S particle. May play a critical role in biogenesis of 30S subunits. The protein is Ribosomal RNA small subunit methyltransferase A of Synechococcus elongatus (strain ATCC 33912 / PCC 7942 / FACHB-805) (Anacystis nidulans R2).